Consider the following 691-residue polypeptide: Elongation factor G (691 aa).

Residues 8-282 (ERVRNIGIAA…AVVDYLPAPV (275 aa)) enclose the tr-type G domain. GTP is bound by residues 17–24 (AHIDAGKT), 81–85 (DTPGH), and 135–138 (NKMD).

The protein belongs to the TRAFAC class translation factor GTPase superfamily. Classic translation factor GTPase family. EF-G/EF-2 subfamily.

Its subcellular location is the cytoplasm. Functionally, catalyzes the GTP-dependent ribosomal translocation step during translation elongation. During this step, the ribosome changes from the pre-translocational (PRE) to the post-translocational (POST) state as the newly formed A-site-bound peptidyl-tRNA and P-site-bound deacylated tRNA move to the P and E sites, respectively. Catalyzes the coordinated movement of the two tRNA molecules, the mRNA and conformational changes in the ribosome. The sequence is that of Elongation factor G from Prochlorococcus marinus (strain MIT 9211).